We begin with the raw amino-acid sequence, 63 residues long: Small ribosomal subunit protein eS17 (63 aa).

This sequence belongs to the eukaryotic ribosomal protein eS17 family.

The chain is Small ribosomal subunit protein eS17 (rps17e) from Haloarcula marismortui (strain ATCC 43049 / DSM 3752 / JCM 8966 / VKM B-1809) (Halobacterium marismortui).